Consider the following 310-residue polypeptide: tRNA dimethylallyltransferase (310 aa).

Residue 11-18 (GPTAVGKT) coordinates ATP. Residue 13-18 (TAVGKT) participates in substrate binding. Residues 36–39 (DSMQ) are interaction with substrate tRNA.

Belongs to the IPP transferase family. Monomer. It depends on Mg(2+) as a cofactor.

It carries out the reaction adenosine(37) in tRNA + dimethylallyl diphosphate = N(6)-dimethylallyladenosine(37) in tRNA + diphosphate. Catalyzes the transfer of a dimethylallyl group onto the adenine at position 37 in tRNAs that read codons beginning with uridine, leading to the formation of N6-(dimethylallyl)adenosine (i(6)A). The protein is tRNA dimethylallyltransferase of Shouchella clausii (strain KSM-K16) (Alkalihalobacillus clausii).